Consider the following 154-residue polypeptide: uncharacterized protein (154 aa).

The interval 1–37 (MDNLKEKPLSYNINNNNLNNNNNNNNNNNNNNNNINN) is disordered. Positions 12–37 (NINNNNLNNNNNNNNNNNNNNNNINN) are enriched in low complexity. N82 carries N-linked (GlcNAc...) asparagine glycosylation. A helical transmembrane segment spans residues 116-136 (IIITTIVVLLMIAVSLGLILA). N-linked (GlcNAc...) asparagine glycosylation is present at N149.

Its subcellular location is the membrane. This is an uncharacterized protein from Dictyostelium discoideum (Social amoeba).